The chain runs to 249 residues: Proteasome subunit alpha type-7-1A (249 aa).

Belongs to the peptidase T1A family. In terms of assembly, the 26S proteasome consists of a 20S proteasome core and two 19S regulatory subunits. The 20S proteasome core is composed of 28 subunits that are arranged in four stacked rings, resulting in a barrel-shaped structure. The two end rings are each formed by seven alpha subunits, and the two central rings are each formed by seven beta subunits. The catalytic chamber with the active sites is on the inside of the barrel. In terms of tissue distribution, testis specific.

It is found in the cytoplasm. It localises to the nucleus. In terms of biological role, the proteasome is a multicatalytic proteinase complex which is characterized by its ability to cleave peptides with Arg, Phe, Tyr, Leu, and Glu adjacent to the leaving group at neutral or slightly basic pH. The proteasome has an ATP-dependent proteolytic activity. This chain is Proteasome subunit alpha type-7-1A (Prosalpha4T1), found in Drosophila melanogaster (Fruit fly).